The following is a 454-amino-acid chain: Keratin, type I cuticular Ha5 (454 aa).

The tract at residues 1-97 (MASKCLKASF…FGEGILTGNE (97 aa)) is head. Residues 97-407 (EKETMQFLND…GLLDSEDCKL (311 aa)) form the IF rod domain. The interval 98–125 (KETMQFLNDRLASYLEKCGSWSGRTRSW) is coil 1A. The segment at 134–142 (SNSALPVPD) is linker 1. The coil 1B stretch occupies residues 143–243 (YQSYFQTIEE…HEEEVNSLRC (101 aa)). The segment at 244–259 (QLGDRLNVEVDAAPPV) is linker 12. The tract at residues 260–403 (DLNRVLNEMR…NTYRGLLDSE (144 aa)) is coil 2. The segment at 404–454 (DCKLPCNPCAPDHSPSKSCLPCLPAASCGPGMARTTCSPRPICVPCPGSRF) is tail.

Belongs to the intermediate filament family.

This is Keratin, type I cuticular Ha5 from Bos taurus (Bovine).